A 146-amino-acid polypeptide reads, in one-letter code: Hemoglobin subunit beta-1 (146 aa).

A Globin domain is found at G2–H146. The heme b site is built by H63 and H92.

It belongs to the globin family. As to quaternary structure, heterotetramer of two alpha chains and two beta chains. As to expression, red blood cells.

Involved in oxygen transport from the lung to the various peripheral tissues. The protein is Hemoglobin subunit beta-1 (hbb1) of Xenopus laevis (African clawed frog).